The sequence spans 246 residues: Probable transcriptional regulatory protein SPO1072 (246 aa).

The segment at 1 to 22 is disordered; it reads MAGHSKWANIQHRKGRQDAARS.

It belongs to the TACO1 family.

The protein resides in the cytoplasm. The polypeptide is Probable transcriptional regulatory protein SPO1072 (Ruegeria pomeroyi (strain ATCC 700808 / DSM 15171 / DSS-3) (Silicibacter pomeroyi)).